The sequence spans 1222 residues: Chitin synthase 4 (1222 aa).

A disordered region spans residues 1–108 (MSLPERPGGI…NRIDKDHPNY (108 aa)). The segment covering 51 to 68 (LSANSFAETIPSPNNSFV) has biased composition (polar residues). N-linked (GlcNAc...) asparagine glycosylation occurs at Asn64. Basic and acidic residues predominate over residues 94–107 (IRPERNRIDKDHPN). The N-linked (GlcNAc...) asparagine glycan is linked to Asn116. The segment at 136–199 (TTDVSGSRSQ…KSTKKRSTPQ (64 aa)) is disordered. Polar residues predominate over residues 137–154 (TDVSGSRSQTLDGVSDTS). Basic residues predominate over residues 176–196 (SAKRVSRHKSGKITKSTKKRS). Transmembrane regions (helical) follow at residues 204–224 (PPSFWNVYCAIITFWCPDFML) and 242–262 (MGLISLILLIMGCVGFITFGF). Residues Asn378 and Asn418 are each glycosylated (N-linked (GlcNAc...) asparagine). The helical transmembrane segment at 509–529 (YVFLALILSVVGSRFVLALIF) threads the bilayer. Residues 595–662 (RFSTVYGPDR…PPSDGPGPAG (68 aa)) form a disordered region. The segment covering 608 to 643 (NKRVPTTMASSGGSGSQLLHPNSMYRQGNDSRSSFL) has biased composition (polar residues). N-linked (GlcNAc...) asparagine glycans are attached at residues Asn636 and Asn1031. The next 3 membrane-spanning stretches (helical) occupy residues 1056-1076 (FIVFVELMGTLVLPAAIAFTF), 1090-1110 (VIPLILLALILGLPAVLIVIT), and 1116-1136 (YLVWMMIYLFSLPVWNFVLPV). A disordered region spans residues 1201 to 1222 (GGGNSWSMPPGHQYHDDYYSDA). Basic and acidic residues predominate over residues 1213–1222 (QYHDDYYSDA).

The protein belongs to the chitin synthase family. Class IV subfamily.

It localises to the cell membrane. The catalysed reaction is [(1-&gt;4)-N-acetyl-beta-D-glucosaminyl](n) + UDP-N-acetyl-alpha-D-glucosamine = [(1-&gt;4)-N-acetyl-beta-D-glucosaminyl](n+1) + UDP + H(+). Functionally, polymerizes chitin, a structural polymer of the cell wall and septum, by transferring the sugar moiety of UDP-GlcNAc to the non-reducing end of the growing chitin polymer. Plays a role in cell wall integrity and is involved in tolerance to hyperosmotic conditions. Required to successfully penetrate the host plants and thus plays a key role in pathogenicity. This Verticillium dahliae (strain VdLs.17 / ATCC MYA-4575 / FGSC 10137) (Verticillium wilt) protein is Chitin synthase 4.